A 215-amino-acid chain; its full sequence is Pyrrolidone-carboxylate peptidase (215 aa).

Residues Glu80, Cys143, and His167 contribute to the active site.

The protein belongs to the peptidase C15 family. Homotetramer.

Its subcellular location is the cytoplasm. The catalysed reaction is Release of an N-terminal pyroglutamyl group from a polypeptide, the second amino acid generally not being Pro.. In terms of biological role, removes 5-oxoproline from various penultimate amino acid residues except L-proline. The chain is Pyrrolidone-carboxylate peptidase from Yersinia pseudotuberculosis serotype O:1b (strain IP 31758).